A 543-amino-acid chain; its full sequence is Glucose-6-phosphate isomerase (543 aa).

Glu-351 acts as the Proton donor in catalysis. Catalysis depends on residues His-382 and Lys-511.

The protein belongs to the GPI family.

Its subcellular location is the cytoplasm. The catalysed reaction is alpha-D-glucose 6-phosphate = beta-D-fructose 6-phosphate. Its pathway is carbohydrate biosynthesis; gluconeogenesis. The protein operates within carbohydrate degradation; glycolysis; D-glyceraldehyde 3-phosphate and glycerone phosphate from D-glucose: step 2/4. Its function is as follows. Catalyzes the reversible isomerization of glucose-6-phosphate to fructose-6-phosphate. The polypeptide is Glucose-6-phosphate isomerase (Hydrogenovibrio crunogenus (strain DSM 25203 / XCL-2) (Thiomicrospira crunogena)).